We begin with the raw amino-acid sequence, 175 residues long: UPF0398 protein SPD_0338 (175 aa).

This sequence belongs to the UPF0398 family.

This Streptococcus pneumoniae serotype 2 (strain D39 / NCTC 7466) protein is UPF0398 protein SPD_0338.